The chain runs to 629 residues: Filament-like plant protein 2 (629 aa).

Coiled coils occupy residues Trp-34 to Arg-61 and Asn-102 to Glu-171. Positions Ser-186–Ser-205 are disordered. The span at Ser-193–Glu-203 shows a compositional bias: basic and acidic residues. The stretch at Glu-270–Glu-493 forms a coiled coil.

The protein belongs to the FPP family. As to quaternary structure, interacts with WPP/MAF proteins. Binds to COG2; this interaction promotes the association between cortical microtubules and EXO70A1. As to expression, accumulates in preferentially xylem cells.

It localises to the vesicle. In terms of biological role, ensures, when in complex with FPP3/VETH1 and COG2, the correct secondary cell wall (SCW) deposition pattern by recruiting exocyst components to cortical microtubules in xylem cells during secondary cell wall deposition by recruiting EXO70A1. This chain is Filament-like plant protein 2, found in Arabidopsis thaliana (Mouse-ear cress).